A 399-amino-acid chain; its full sequence is Elongation factor Tu (399 aa).

The 198-residue stretch at 10-207 folds into the tr-type G domain; it reads KPHLNIGTIG…AVDNYVPEPQ (198 aa). Residues 19–26 are G1; the sequence is GHIDHGKT. Position 19–26 (19–26) interacts with GTP; that stretch reads GHIDHGKT. Thr26 contributes to the Mg(2+) binding site. The G2 stretch occupies residues 60-64; sequence GITIN. The interval 81–84 is G3; it reads DCPG. GTP-binding positions include 81-85 and 136-139; these read DCPGH and NKVD. The segment at 136 to 139 is G4; sequence NKVD. The G5 stretch occupies residues 174 to 176; that stretch reads SAL.

This sequence belongs to the TRAFAC class translation factor GTPase superfamily. Classic translation factor GTPase family. EF-Tu/EF-1A subfamily. As to quaternary structure, monomer.

Its subcellular location is the cytoplasm. It catalyses the reaction GTP + H2O = GDP + phosphate + H(+). GTP hydrolase that promotes the GTP-dependent binding of aminoacyl-tRNA to the A-site of ribosomes during protein biosynthesis. This chain is Elongation factor Tu, found in Kosmotoga olearia (strain ATCC BAA-1733 / DSM 21960 / TBF 19.5.1).